The chain runs to 150 residues: 3-dehydroquinate dehydratase (150 aa).

The active-site Proton acceptor is tyrosine 26. Substrate is bound by residues asparagine 77, histidine 83, and aspartate 90. Histidine 103 acts as the Proton donor in catalysis. Substrate is bound by residues 104–105 and arginine 114; that span reads LS.

The protein belongs to the type-II 3-dehydroquinase family. Homododecamer.

The enzyme catalyses 3-dehydroquinate = 3-dehydroshikimate + H2O. Its pathway is metabolic intermediate biosynthesis; chorismate biosynthesis; chorismate from D-erythrose 4-phosphate and phosphoenolpyruvate: step 3/7. Functionally, catalyzes a trans-dehydration via an enolate intermediate. The chain is 3-dehydroquinate dehydratase from Erwinia tasmaniensis (strain DSM 17950 / CFBP 7177 / CIP 109463 / NCPPB 4357 / Et1/99).